A 165-amino-acid polypeptide reads, in one-letter code: Chorismate pyruvate-lyase (165 aa).

Residues M35, R77, L115, and E156 each coordinate substrate.

This sequence belongs to the UbiC family. Monomer.

The protein localises to the cytoplasm. The enzyme catalyses chorismate = 4-hydroxybenzoate + pyruvate. The protein operates within cofactor biosynthesis; ubiquinone biosynthesis. Its function is as follows. Removes the pyruvyl group from chorismate, with concomitant aromatization of the ring, to provide 4-hydroxybenzoate (4HB) for the ubiquinone pathway. The protein is Chorismate pyruvate-lyase of Salmonella enteritidis PT4 (strain P125109).